The chain runs to 518 residues: PTS system mannitol-specific EIICB component (518 aa).

The Cytoplasmic portion of the chain corresponds to 1–31 (MDTMSNSQQNKGIGRKVQAFGSFLSSMIMPN). In terms of domain architecture, PTS EIIC type-2 spans 20 to 352 (FGSFLSSMIM…LKFTKDPKQD (333 aa)). The helical transmembrane segment at 32–53 (IGAFIAWGFIAAIFIDNGWFPN) threads the bilayer. The Extracellular portion of the chain corresponds to 54–57 (KDLA). Residues 58–78 (QLAGPMITYLIPLLIAFSGGR) form a helical membrane-spanning segment. Residues 79–142 (LIHDLRGGII…QGFEMLFNNF (64 aa)) are Cytoplasmic-facing. Residues 143–164 (SAGILGFIMTIFGFEVLAPIMK) form a helical membrane-spanning segment. Residues 165–173 (FIMHILSVG) are Extracellular-facing. A helical membrane pass occupies residues 174–194 (VEALVHAHLLPLVSILVEPAK). The Cytoplasmic segment spans residues 195–281 (IVFLNNAINH…VLMRPLLFVS (87 aa)). The helical transmembrane segment at 282–301 (VILGGMTGVATYSLLDFGFK) threads the bilayer. The Extracellular portion of the chain corresponds to 302–321 (TPASPGSIIVYAINAPKGEF). A helical membrane pass occupies residues 322-343 (LHMLTGVVLAALVSFVVSALIL). Residues 344–518 (KFTKDPKQDL…LINNLKEDQD (175 aa)) are Cytoplasmic-facing. Residues 369 to 406 (SVASKLSAKDDNKAADNKTAETTTATAASNKAEDKDSD) form a disordered region. Residues 375 to 387 (SAKDDNKAADNKT) show a composition bias toward basic and acidic residues. Low complexity predominate over residues 388 to 398 (AETTTATAASN). The region spanning 426–518 (DHVIFACDAG…LINNLKEDQD (93 aa)) is the PTS EIIB type-2 domain. The active-site Phosphocysteine intermediate is Cys-432. Position 432 is a phosphocysteine; by EIIA (Cys-432).

As to quaternary structure, homodimer.

It localises to the cell membrane. It catalyses the reaction D-mannitol(out) + N(pros)-phospho-L-histidyl-[protein] = D-mannitol 1-phosphate(in) + L-histidyl-[protein]. Functionally, the phosphoenolpyruvate-dependent sugar phosphotransferase system (sugar PTS), a major carbohydrate active transport system, catalyzes the phosphorylation of incoming sugar substrates concomitantly with their translocation across the cell membrane. The enzyme II CmtAB PTS system is involved in D-mannitol transport. This is PTS system mannitol-specific EIICB component from Staphylococcus carnosus.